We begin with the raw amino-acid sequence, 271 residues long: Hydroxyethylthiazole kinase (271 aa).

A substrate-binding site is contributed by methionine 46. ATP contacts are provided by arginine 122 and threonine 169. A substrate-binding site is contributed by glycine 196.

The protein belongs to the Thz kinase family. Mg(2+) serves as cofactor.

The enzyme catalyses 5-(2-hydroxyethyl)-4-methylthiazole + ATP = 4-methyl-5-(2-phosphooxyethyl)-thiazole + ADP + H(+). It functions in the pathway cofactor biosynthesis; thiamine diphosphate biosynthesis; 4-methyl-5-(2-phosphoethyl)-thiazole from 5-(2-hydroxyethyl)-4-methylthiazole: step 1/1. In terms of biological role, catalyzes the phosphorylation of the hydroxyl group of 4-methyl-5-beta-hydroxyethylthiazole (THZ). In Alkaliphilus oremlandii (strain OhILAs) (Clostridium oremlandii (strain OhILAs)), this protein is Hydroxyethylthiazole kinase.